The sequence spans 183 residues: Orotate phosphoribosyltransferase (183 aa).

5-phospho-alpha-D-ribose 1-diphosphate-binding positions include arginine 90, lysine 91, lysine 94, and 115 to 123 (DDVATTGGS). 2 residues coordinate orotate: threonine 119 and arginine 147.

It belongs to the purine/pyrimidine phosphoribosyltransferase family. PyrE subfamily. As to quaternary structure, homodimer. Requires Mg(2+) as cofactor.

It carries out the reaction orotidine 5'-phosphate + diphosphate = orotate + 5-phospho-alpha-D-ribose 1-diphosphate. The protein operates within pyrimidine metabolism; UMP biosynthesis via de novo pathway; UMP from orotate: step 1/2. In terms of biological role, catalyzes the transfer of a ribosyl phosphate group from 5-phosphoribose 1-diphosphate to orotate, leading to the formation of orotidine monophosphate (OMP). This is Orotate phosphoribosyltransferase from Methanopyrus kandleri (strain AV19 / DSM 6324 / JCM 9639 / NBRC 100938).